The primary structure comprises 220 residues: 3-keto-L-gulonate-6-phosphate decarboxylase SgbH (220 aa).

Residue Asp-11 coordinates substrate. Positions 33 and 62 each coordinate Mg(2+). Arg-192 contacts substrate.

The protein belongs to the HPS/KGPDC family. KGPDC subfamily. Homodimer. It depends on Mg(2+) as a cofactor.

It carries out the reaction 3-dehydro-L-gulonate 6-phosphate + H(+) = L-xylulose 5-phosphate + CO2. Functionally, catalyzes the decarboxylation of 3-keto-L-gulonate-6-P into L-xylulose-5-P. May be involved in the utilization of 2,3-diketo-L-gulonate. The polypeptide is 3-keto-L-gulonate-6-phosphate decarboxylase SgbH (sgbH) (Escherichia coli (strain K12)).